We begin with the raw amino-acid sequence, 121 residues long: Dihydroneopterin aldolase (121 aa).

Residues glutamate 22, tyrosine 54, and 73-74 (LE) each bind substrate. Lysine 100 acts as the Proton donor/acceptor in catalysis.

The protein belongs to the DHNA family. Homooctamer. Four molecules assemble into a ring, and two rings come together to give a cylinder with a hole of at least 13 a diameter.

The enzyme catalyses 7,8-dihydroneopterin = 6-hydroxymethyl-7,8-dihydropterin + glycolaldehyde. It carries out the reaction 7,8-dihydroneopterin = 7,8-dihydromonapterin. It participates in cofactor biosynthesis; tetrahydrofolate biosynthesis; 2-amino-4-hydroxy-6-hydroxymethyl-7,8-dihydropteridine diphosphate from 7,8-dihydroneopterin triphosphate: step 3/4. Functionally, catalyzes the conversion of 7,8-dihydroneopterin to 6-hydroxymethyl-7,8-dihydropterin. Can also catalyze the epimerization of carbon 2' of dihydroneopterin to dihydromonapterin. This Staphylococcus aureus (strain COL) protein is Dihydroneopterin aldolase (folB).